Consider the following 132-residue polypeptide: uncharacterized protein (132 aa).

The chain crosses the membrane as a helical span at residues 10 to 30; that stretch reads LVLFFTIILIALCPFVYYLWD. Positions 50–79 form a coiled coil; the sequence is KNCSTEIEHAIEEHKRKNKEKKEAKEKRLA.

The protein resides in the membrane. This is an uncharacterized protein from Invertebrate iridescent virus 6 (IIV-6).